A 389-amino-acid polypeptide reads, in one-letter code: Succinyl-diaminopimelate desuccinylase (389 aa).

Residue His-72 participates in Zn(2+) binding. Asp-74 is an active-site residue. Residue Asp-105 participates in Zn(2+) binding. The active-site Proton acceptor is Glu-144. Residues Glu-145, Glu-173, and His-362 each contribute to the Zn(2+) site.

Belongs to the peptidase M20A family. DapE subfamily. As to quaternary structure, homodimer. Requires Zn(2+) as cofactor. Co(2+) serves as cofactor.

The catalysed reaction is N-succinyl-(2S,6S)-2,6-diaminopimelate + H2O = (2S,6S)-2,6-diaminopimelate + succinate. Its pathway is amino-acid biosynthesis; L-lysine biosynthesis via DAP pathway; LL-2,6-diaminopimelate from (S)-tetrahydrodipicolinate (succinylase route): step 3/3. Its function is as follows. Catalyzes the hydrolysis of N-succinyl-L,L-diaminopimelic acid (SDAP), forming succinate and LL-2,6-diaminopimelate (DAP), an intermediate involved in the bacterial biosynthesis of lysine and meso-diaminopimelic acid, an essential component of bacterial cell walls. This is Succinyl-diaminopimelate desuccinylase from Rhodopseudomonas palustris (strain HaA2).